Consider the following 142-residue polypeptide: Transcriptional regulator MraZ (142 aa).

2 SpoVT-AbrB domains span residues 5–51 (ASAL…PRPE) and 77–120 (AMDV…DSQT).

Belongs to the MraZ family. As to quaternary structure, forms oligomers.

It is found in the cytoplasm. It localises to the nucleoid. The chain is Transcriptional regulator MraZ from Burkholderia ambifaria (strain MC40-6).